The sequence spans 83 residues: MSGSTGERSFADIITSIRYWVIHSITIPSLFIAGWLFVSTGLAYDVFGSPRPNEYFTENRQGIPLITGRFDSLEQLDEFSRSF.

A helical membrane pass occupies residues 21-35 (VIHSITIPSLFIAGW). His-23 contributes to the heme binding site.

It belongs to the PsbE/PsbF family. In terms of assembly, heterodimer of an alpha subunit and a beta subunit. PSII is composed of 1 copy each of membrane proteins PsbA, PsbB, PsbC, PsbD, PsbE, PsbF, PsbH, PsbI, PsbJ, PsbK, PsbL, PsbM, PsbT, PsbX, PsbY, PsbZ, Psb30/Ycf12, at least 3 peripheral proteins of the oxygen-evolving complex and a large number of cofactors. It forms dimeric complexes. Requires heme b as cofactor.

Its subcellular location is the plastid. The protein localises to the chloroplast thylakoid membrane. Functionally, this b-type cytochrome is tightly associated with the reaction center of photosystem II (PSII). PSII is a light-driven water:plastoquinone oxidoreductase that uses light energy to abstract electrons from H(2)O, generating O(2) and a proton gradient subsequently used for ATP formation. It consists of a core antenna complex that captures photons, and an electron transfer chain that converts photonic excitation into a charge separation. This Helianthus annuus (Common sunflower) protein is Cytochrome b559 subunit alpha.